A 168-amino-acid chain; its full sequence is Ribosome maturation factor RimM (168 aa).

The region spanning 95–168 (KEGDYYWTDL…IIVVEWDADF (74 aa)) is the PRC barrel domain.

It belongs to the RimM family. Binds ribosomal protein uS19.

It is found in the cytoplasm. An accessory protein needed during the final step in the assembly of 30S ribosomal subunit, possibly for assembly of the head region. Essential for efficient processing of 16S rRNA. May be needed both before and after RbfA during the maturation of 16S rRNA. It has affinity for free ribosomal 30S subunits but not for 70S ribosomes. This chain is Ribosome maturation factor RimM, found in Coxiella burnetii (strain CbuK_Q154) (Coxiella burnetii (strain Q154)).